The sequence spans 659 residues: MDDTSGTEGECSELERAGGWFMVEAIVDRRTGDTVSSDEDEEEDGGEDLVDFIDDRPVGDGQEVAQELLLQQAAADDDVEVQTVKRKFAPSPYFSPVCVHPSIENELSPRLDAIKLGRQTSKAKRRLFELPDSGYGQTQVDTESGPKQVQDICKTSQQDGCQGADEGRGRNVGGNGSQEEERAGGDGEESQTESVQTDTTACGVLAILKASNHKATLLGKFKEQFGLGFNELIRHFKSNKTVCSDWVVCVFGVYCTLAESFKTLIQPQCEYAHIQVLSCQWGMTVLTLVRFKRAKNRETVAKGFSTLLNVPENHMLIEPPKLRSAPAALYWFKTSLSNCSEVFGETPEWIVRQTVVGHALEEAQFSLSEMVQYAYDHDITDESTLAYEYALQADTDANAAAFLASNCQAKYVKDACTMCRHYKRGEQARMNMSEWIKFRGDKIQGDGDWKPIVQYLRYQDVEFIPFLCALKSFLQGIPKKSCIVFYGPADTGKSYFCMSLLKFLGGVVISYANSSSHFWLQPLAEAKIGLLDDATSQCWCYIDTYLRNALDGNQVCIDRKHRALLQLKCPPLLITTNINPLGDERWKYLRSRLQVFTFNNKFPLTTQGEPLYTLNDQNWKSFFQRLWARLNLTDPEDEEDNGNTSEPFRCVPGQNTRTV.

Residues 30–57 (RTGDTVSSDEDEEEDGGEDLVDFIDDRP) form a disordered region. The segment covering 36 to 52 (SSDEDEEEDGGEDLVDF) has biased composition (acidic residues). The Nuclear localization signal signature appears at 85–87 (KRK). Residues S91, S95, S108, and S121 each carry the phosphoserine; by host modification. Positions 107–116 (LSPRLDAIKL) match the Nuclear export signal motif. Residues 134–195 (GYGQTQVDTE…DGEESQTESV (62 aa)) form a disordered region. Residues 135–160 (YGQTQVDTESGPKQVQDICKTSQQDG) are compositionally biased toward polar residues. Positions 196-362 (QTDTTACGVL…QTVVGHALEE (167 aa)) are DNA-binding region. The region spanning 461-611 (VEFIPFLCAL…FPLTTQGEPL (151 aa)) is the SF3 helicase domain. 487–494 (GPADTGKS) serves as a coordination point for ATP. A Glycyl lysine isopeptide (Lys-Gly) (interchain with G-Cter in SUMO) cross-link involves residue K568. Positions 634–659 (DPEDEEDNGNTSEPFRCVPGQNTRTV) are disordered.

This sequence belongs to the papillomaviridae E1 protein family. As to quaternary structure, can form hexamers. Interacts with E2 protein; this interaction increases E1 DNA binding specificity. Interacts with host DNA polymerase subunit POLA2. Interacts with host single stranded DNA-binding protein RPA1. Interacts with host TOP1; this interaction stimulates the enzymatic activity of TOP1. Post-translationally, phosphorylated. In terms of processing, sumoylated.

Its subcellular location is the host nucleus. The catalysed reaction is Couples ATP hydrolysis with the unwinding of duplex DNA by translocating in the 3'-5' direction.. It carries out the reaction ATP + H2O = ADP + phosphate + H(+). ATP-dependent DNA 3'-5' helicase required for initiation of viral DNA replication. It forms a complex with the viral E2 protein. The E1-E2 complex binds to the replication origin which contains binding sites for both proteins. During the initial step, a dimer of E1 interacts with a dimer of protein E2 leading to a complex that binds the viral origin of replication with high specificity. Then, a second dimer of E1 displaces the E2 dimer in an ATP-dependent manner to form the E1 tetramer. Following this, two E1 monomers are added to each half of the site, which results in the formation of two E1 trimers on the viral ori. Subsequently, two hexamers will be created. The double hexamer acts as a bi-directional helicase machinery and unwinds the viral DNA and then recruits the host DNA polymerase to start replication. The sequence is that of Replication protein E1 from Homo sapiens (Human).